The sequence spans 290 residues: MKKLLREASEYLLSRGIRFPQREAEDILMDLLEISSRSALHQAKLSSEEQSLYWKRLRKRGDRCPTAYIHGKVHFLGVELQVTPQVLIPRQETEIFVEQIIGYLQMHKEKTTFYDVCCGSGCIGLAVRKHCPHVRVTLSDISPEALAIAESNARSNALAVDFLLGDLFDPFSFPADVLVCNPPYLSYKEFFESDPEVRCHEPWKALVGGVSGLEFYHRIATHIHKILVSGGVGWLEIGSTQGEDIKQIFHAKGIRGRVLKDYAQLDRFFFLENQANDAVSSGEVSGFSER.

Residues aspartate 140 and asparagine 181 each coordinate S-adenosyl-L-methionine. 181–184 is a binding site for substrate; it reads NPPY.

Belongs to the protein N5-glutamine methyltransferase family. PrmC subfamily.

The catalysed reaction is L-glutaminyl-[peptide chain release factor] + S-adenosyl-L-methionine = N(5)-methyl-L-glutaminyl-[peptide chain release factor] + S-adenosyl-L-homocysteine + H(+). Functionally, methylates the class 1 translation termination release factors RF1/PrfA and RF2/PrfB on the glutamine residue of the universally conserved GGQ motif. The polypeptide is Release factor glutamine methyltransferase (Chlamydia trachomatis serovar D (strain ATCC VR-885 / DSM 19411 / UW-3/Cx)).